The following is a 229-amino-acid chain: GTP cyclohydrolase 1 (229 aa).

The disordered stretch occupies residues 1 to 21; the sequence is MTLAKPGSGSQSRMDDKAHFK. The Zn(2+) site is built by Cys116, His119, and Cys187.

The protein belongs to the GTP cyclohydrolase I family. Toroid-shaped homodecamer, composed of two pentamers of five dimers.

The enzyme catalyses GTP + H2O = 7,8-dihydroneopterin 3'-triphosphate + formate + H(+). The protein operates within cofactor biosynthesis; 7,8-dihydroneopterin triphosphate biosynthesis; 7,8-dihydroneopterin triphosphate from GTP: step 1/1. This chain is GTP cyclohydrolase 1, found in Synechococcus sp. (strain JA-2-3B'a(2-13)) (Cyanobacteria bacterium Yellowstone B-Prime).